Consider the following 1850-residue polypeptide: Voltage-dependent L-type calcium channel subunit alpha-1S (1850 aa).

The interval 1 to 23 is disordered; sequence MEPSSPQDEGLRKKQPKKPVPEI. Residues 1-51 are Cytoplasmic-facing; the sequence is MEPSSPQDEGLRKKQPKKPVPEILPRPPRALFCLTLQNPLRKACISVVEWK. The I repeat unit spans residues 38–337; it reads NPLRKACISV…LVLGVLSGEF (300 aa). Residues 52-70 form a helical membrane-spanning segment; the sequence is PFETIILLTIFANCVALAV. Topologically, residues 71–85 are extracellular; it reads YLPMPEDDNNTLNLG. Residues 86 to 106 traverse the membrane as a helical segment; that stretch reads LEKLEYFFLIVFSIEAAMKII. Residues 107–115 are Cytoplasmic-facing; that stretch reads AYGFLFHQD. A helical transmembrane segment spans residues 116 to 136; it reads AYLRSGWNVLDFIIVFLGVFT. Topologically, residues 137 to 160 are extracellular; that stretch reads AILEQVNIIQTNTAPMSSKGAGLD. The chain crosses the membrane as a helical span at residues 161–179; sequence VKALRAFRVLRPLRLVSGV. At 180 to 196 the chain is on the cytoplasmic side; it reads PSLQVVLNSIFKAMLPL. Residues 197–218 traverse the membrane as a helical segment; that stretch reads FHIALLVLFMVIIYAIIGLELF. The Extracellular segment spans residues 219–279; it reads KGKMHKTCYF…HGITHFDNFG (61 aa). 2 disulfides stabilise this stretch: C226-C254 and C245-C261. Positions 280–301 form an intramembrane region, pore-forming; that stretch reads FSMLTVYQCISMEGWTDVLYWV. The short motif at 290 to 293 is the Selectivity filter of repeat I element; the sequence is SMEG. Residue E292 participates in Ca(2+) binding. At 302 to 309 the chain is on the extracellular side; that stretch reads NDAIGNEW. Residues 310–330 form a helical membrane-spanning segment; that stretch reads PWIYFVTLILLGSFFILNLVL. The Cytoplasmic portion of the chain corresponds to 331 to 432; it reads GVLSGEFTKE…WKCHDLVKSK (102 aa). Residues 357 to 374 form a binding to the beta subunit region; it reads QQLEEDLRGYMSWITQGE. Phosphoserine is present on residues S393 and S397. An II repeat occupies 418–664; that stretch reads NRVFRWKCHD…VFLAIAVDNL (247 aa). Residues 433-451 traverse the membrane as a helical segment; sequence VFYWLVILIVALNTLSIAS. Residues 452–462 are Extracellular-facing; it reads EHHNQPLWLTH. Residues 463–483 traverse the membrane as a helical segment; it reads LQDVANRVLLALFTIEMLMKM. Over 484-494 the chain is Cytoplasmic; that stretch reads YGLGLRQYFMS. The chain crosses the membrane as a helical span at residues 495–514; it reads IFNRFDCFVVCSGILEILLV. Residues 515–523 are Extracellular-facing; the sequence is ESGAMTPLG. A helical membrane pass occupies residues 524–542; the sequence is ISVLRCIRLLRLFKITKYW. Over 543–561 the chain is Cytoplasmic; the sequence is TSLSNLVASLLNSIRSIAS. A helical membrane pass occupies residues 562–581; that stretch reads LLLLLFLFMIIFALLGMQLF. Over 582 to 601 the chain is Extracellular; it reads GGRYDFEDTEVRRSNFDNFP. Positions 602–623 form an intramembrane region, pore-forming; it reads QALISVFQVLTGEDWNSVMYNG. The Selectivity filter of repeat II signature appears at 612–615; the sequence is TGED. Position 614 (E614) interacts with Ca(2+). The Extracellular portion of the chain corresponds to 624 to 633; the sequence is IMAYGGPSYP. A helical membrane pass occupies residues 634-653; that stretch reads GVLVCIYFIILFVCGNYILL. At 654 to 799 the chain is on the cytoplasmic side; sequence NVFLAIAVDN…VLCHRIVNAT (146 aa). Disordered regions lie at residues 673 to 717 and 731 to 758; these read AQKA…IPTT and EVKDPYPSADFPGDDEEDEPEIPASPRP. A Phosphoserine; by PKA modification is found at S687. Residues 690–711 are compositionally biased toward basic and acidic residues; the sequence is LPDKSEEERSTMTKKLEQKPKG. A compositionally biased stretch (acidic residues) spans 742-751; sequence PGDDEEDEPE. Residues 786–1068 form an III repeat; sequence NKIRVLCHRI…IFVGFVIVTF (283 aa). Residues 800–818 traverse the membrane as a helical segment; that stretch reads WFTNFILLFILLSSAALAA. Topologically, residues 819 to 830 are extracellular; the sequence is EDPIRADSMRNQ. The helical transmembrane segment at 831 to 850 threads the bilayer; the sequence is ILEYFDYVFTAVFTVEIVLK. Residues 851 to 866 lie on the Cytoplasmic side of the membrane; sequence MTTYGAFLHKGSFCRN. The chain crosses the membrane as a helical span at residues 867 to 885; it reads YFNILDLLVVAVSLISMGL. At 886–892 the chain is on the extracellular side; it reads ESSAISV. The helical transmembrane segment at 893–911 threads the bilayer; that stretch reads VKILRVLRVLRPLRAINRA. Over 912–930 the chain is Cytoplasmic; sequence KGLKHVVQCVFVAIRTIGN. The helical transmembrane segment at 931 to 950 threads the bilayer; it reads IVLVTTLLQFMFACIGVQLF. At 951–1000 the chain is on the extracellular side; it reads KGKFYSCNDLSKMTEEECRGYYYIYKDGDPTQIELRPRQWIHNDFHFDNV. A disulfide bridge connects residues C957 and C968. The segment at 988–1077 is dihydropyridine binding; the sequence is RQWIHNDFHF…FQEQGETEYK (90 aa). The segment at residues 1001-1021 is an intramembrane region (pore-forming); it reads LSAMMSLFTVSTFEGWPQLLY. The Selectivity filter of repeat III signature appears at 1012-1015; the sequence is TFEG. Residue E1014 coordinates Ca(2+). Residues 1022–1038 are Extracellular-facing; that stretch reads KAIDSNEEDTGPVYNNR. Residues 1039–1060 traverse the membrane as a helical segment; that stretch reads VEMAIFFIIYIILIAFFMMNIF. At 1061–1118 the chain is on the cytoplasmic side; it reads VGFVIVTFQEQGETEYKNCELDKNQRQCVQYALKARPLRCYIPKNPYQYQVWYVVTSS. Residues 1105 to 1384 form an IV repeat; it reads NPYQYQVWYV…LFVAVIMDNF (280 aa). Residues 1119–1140 traverse the membrane as a helical segment; the sequence is YFEYLMFALIMLNTICLGMQHY. Residue N1141 is glycosylated (N-linked (GlcNAc...) asparagine). At 1141–1148 the chain is on the extracellular side; sequence NQSEQMNH. The chain crosses the membrane as a helical span at residues 1149–1170; sequence ISDILNVAFTIIFTLEMILKLI. The Cytoplasmic segment spans residues 1171-1180; sequence AFKPRGYFGD. A helical membrane pass occupies residues 1181–1200; the sequence is PWNVFDFLIVIGSIIDVILS. Residues 1201–1231 lie on the Extracellular side of the membrane; the sequence is EIDTLLASSGGLYCLGGGCGNVDPDESARIS. Residues 1232–1250 form a helical membrane-spanning segment; it reads SAFFRLFRVMRLIKLLSRA. Residues 1251–1268 lie on the Cytoplasmic side of the membrane; the sequence is EGVRTLLWTFIKSFQALP. The helical transmembrane segment at 1269 to 1289 threads the bilayer; the sequence is YVALLIVMLFFIYAVIGMQMF. The Extracellular segment spans residues 1290-1311; that stretch reads GKIAMVDGTQINRNNNFQTFPQ. The pore-forming intramembrane region spans 1312-1330; that stretch reads AVLLLFRCATGEAWQEILL. Residues 1321 to 1324 carry the Selectivity filter of repeat IV motif; the sequence is TGEA. Residues 1331–1356 lie on the Extracellular side of the membrane; sequence ACSYGKRCDPESDYAPGEEYACGTNF. The tract at residues 1337–1403 is dihydropyridine binding; the sequence is RCDPESDYAP…LGPHHLDEFK (67 aa). C1338 and C1352 are disulfide-bonded. The segment at 1349–1391 is phenylalkylamine binding; that stretch reads EYACGTNFAYYYFISFYMLCAFLIINLFVAVIMDNFDYLTRDW. The helical transmembrane segment at 1357 to 1381 threads the bilayer; the sequence is AYYYFISFYMLCAFLIINLFVAVIM. Residues 1382-1850 are Cytoplasmic-facing; the sequence is DNFDYLTRDW…PKGGAMPREP (469 aa). Positions 1522 to 1542 are interaction with calmodulin; it reads KFYATFLIQEHFRKFMKRQEE. S1575 carries the post-translational modification Phosphoserine; by PKA and CAMK2. A Phosphothreonine modification is found at T1579. S1617 bears the Phosphoserine; by PKA mark. The interval 1697 to 1779 is disordered; sequence PVTREGPFSQ…FEERVPRNSA (83 aa). Over residues 1706–1716 the composition is skewed to polar residues; the sequence is QPCSVSGVNSR. Basic and acidic residues-rich tracts occupy residues 1717 to 1726 and 1745 to 1756; these read SHVDKLERQM and QEKHPVHEEGKG.

This sequence belongs to the calcium channel alpha-1 subunit (TC 1.A.1.11) family. CACNA1S subfamily. As to quaternary structure, component of a calcium channel complex consisting of a pore-forming alpha subunit (CACNA1S) and the ancillary subunits CACNB1 or CACNB2, CACNG1 and CACNA2D1. The channel complex contains alpha, beta, gamma and delta subunits in a 1:1:1:1 ratio, i.e. it contains either CACNB1 or CACNB2. CACNA1S channel activity is modulated by the auxiliary subunits (CACNB1 or CACNB2, CACNG1 and CACNA2D1). Interacts with DYSF and JSRP1. Interacts with RYR1. Interacts with STAC, STAC2 and STAC3 (via their SH3 domains). Interacts with CALM. In terms of processing, the alpha-1S subunit is found in two isoforms in the skeletal muscle: a minor form of 212 kDa containing the complete amino acid sequence, and a major form of 190 kDa derived from the full-length form by post-translational proteolysis close to Phe-1690. Post-translationally, phosphorylated. Phosphorylation by PKA activates the calcium channel. Both the minor and major forms are phosphorylated in vitro by PKA. Phosphorylation at Ser-1575 is involved in beta-adrenergic-mediated regulation of the channel. Skeletal muscle specific.

It localises to the cell membrane. It is found in the sarcolemma. The protein resides in the T-tubule. The catalysed reaction is Ca(2+)(in) = Ca(2+)(out). Its activity is regulated as follows. Channel activity is blocked by dihydropyridines (DHP), phenylalkylamines, and by benzothiazepines. Pore-forming, alpha-1S subunit of the voltage-gated calcium channel that gives rise to L-type calcium currents in skeletal muscle. Calcium channels containing the alpha-1S subunit play an important role in excitation-contraction coupling in skeletal muscle via their interaction with RYR1, which triggers Ca(2+) release from the sarcplasmic reticulum and ultimately results in muscle contraction. Long-lasting (L-type) calcium channels belong to the 'high-voltage activated' (HVA) group. The protein is Voltage-dependent L-type calcium channel subunit alpha-1S (Cacna1s) of Rattus norvegicus (Rat).